Consider the following 138-residue polypeptide: Transcription antitermination protein NusB (138 aa).

This sequence belongs to the NusB family.

Functionally, involved in transcription antitermination. Required for transcription of ribosomal RNA (rRNA) genes. Binds specifically to the boxA antiterminator sequence of the ribosomal RNA (rrn) operons. The protein is Transcription antitermination protein NusB of Limosilactobacillus reuteri (strain DSM 20016) (Lactobacillus reuteri).